The sequence spans 204 residues: 5'-deoxynucleotidase HDDC2 (204 aa).

Alanine 2 is modified (N-acetylalanine). A phosphoserine mark is found at serine 3 and serine 5. The region spanning 46-148 (VSDHMYRMAV…VKQLDQCEMI (103 aa)) is the HD domain. A divalent metal cation contacts are provided by histidine 49, histidine 77, aspartate 78, glutamate 81, aspartate 86, isoleucine 87, and aspartate 143. Phosphoserine is present on serine 204.

It belongs to the HDDC2 family. As to quaternary structure, homodimer. Mn(2+) serves as cofactor. The cofactor is Co(2+). Requires Mg(2+) as cofactor.

The catalysed reaction is a 2'-deoxyribonucleoside 5'-phosphate + H2O = a 2'-deoxyribonucleoside + phosphate. Catalyzes the dephosphorylation of the nucleoside 5'-monophosphates deoxyadenosine monophosphate (dAMP), deoxycytidine monophosphate (dCMP), deoxyguanosine monophosphate (dGMP) and deoxythymidine monophosphate (dTMP). This Homo sapiens (Human) protein is 5'-deoxynucleotidase HDDC2 (HDDC2).